A 210-amino-acid polypeptide reads, in one-letter code: Putative polysaccharide-binding protein (210 aa).

The signal sequence occupies residues 1-22 (MGFLKGTAAALTLLSAAAAASA). CBM1 domains follow at residues 23–62 (CGVLYEQCGGIGFDGVTCCSEGLMCMKMGPYYSQCRAMPG), 63–105 (MMGQ…LANK), 125–165 (CGKE…APPP), and 166–210 (KMGE…PMHP).

The sequence is that of Putative polysaccharide-binding protein from Porphyra purpurea (Red seaweed).